The following is a 388-amino-acid chain: Succinate--CoA ligase [ADP-forming] subunit beta (388 aa).

Residues Lys9–His244 form the ATP-grasp domain. Residues Lys46, Gly53 to Gly55, Glu99, Thr102, and Glu107 contribute to the ATP site. Mg(2+) contacts are provided by Asn199 and Asp213. Substrate-binding positions include Asn264 and Gly321–Val323.

It belongs to the succinate/malate CoA ligase beta subunit family. Heterotetramer of two alpha and two beta subunits. Mg(2+) is required as a cofactor.

The catalysed reaction is succinate + ATP + CoA = succinyl-CoA + ADP + phosphate. The enzyme catalyses GTP + succinate + CoA = succinyl-CoA + GDP + phosphate. It participates in carbohydrate metabolism; tricarboxylic acid cycle; succinate from succinyl-CoA (ligase route): step 1/1. Functionally, succinyl-CoA synthetase functions in the citric acid cycle (TCA), coupling the hydrolysis of succinyl-CoA to the synthesis of either ATP or GTP and thus represents the only step of substrate-level phosphorylation in the TCA. The beta subunit provides nucleotide specificity of the enzyme and binds the substrate succinate, while the binding sites for coenzyme A and phosphate are found in the alpha subunit. This is Succinate--CoA ligase [ADP-forming] subunit beta from Shewanella halifaxensis (strain HAW-EB4).